The primary structure comprises 224 residues: Germin-like protein 8-9 (224 aa).

The first 22 residues, 1-22 (MASPSFCLFAALLALVSWQAIA), serve as a signal peptide directing secretion. A disulfide bridge links Cys32 with Cys47. The Cupin type-1 domain maps to 62-212 (AMLDTPRKTN…AFQVGKGTID (151 aa)). N-linked (GlcNAc...) asparagine glycosylation occurs at Asn76. His109, His111, and Glu116 together coordinate Mn(2+). An N-linked (GlcNAc...) asparagine glycan is attached at Asn135. A Mn(2+)-binding site is contributed by His157.

The protein belongs to the germin family. Oligomer (believed to be a pentamer but probably hexamer).

It localises to the secreted. The protein localises to the extracellular space. Its subcellular location is the apoplast. In terms of biological role, plays a role in broad-spectrum disease resistance. Probably has no oxalate oxidase activity even if the active site is conserved. The chain is Germin-like protein 8-9 from Oryza sativa subsp. japonica (Rice).